Here is a 64-residue protein sequence, read N- to C-terminus: Makatoxin-1 (64 aa).

Positions 2-64 constitute an LCN-type CS-alpha/beta domain; it reads RDAYIADSEN…VPIRISGSCR (63 aa). 4 disulfide bridges follow: cysteine 12-cysteine 63, cysteine 16-cysteine 36, cysteine 22-cysteine 46, and cysteine 26-cysteine 48.

As to expression, expressed by the venom gland.

Its subcellular location is the secreted. Its function is as follows. This protein markedly relaxes the rat carbachol-precontracted anococcygeus muscle. This relaxation is inhibited by the inhibitor of nitric oxide (NO) synthase, N-nitro-L-arginine methyl ester (L-NAME), suggesting that the response induced by this protein is NO-mediated. This chain is Makatoxin-1, found in Olivierus martensii (Manchurian scorpion).